The sequence spans 354 residues: UDP-N-acetylglucosamine--N-acetylmuramyl-(pentapeptide) pyrophosphoryl-undecaprenol N-acetylglucosamine transferase (354 aa).

Residues 11 to 13 (TAG), arginine 164, serine 194, and glutamine 289 each bind UDP-N-acetyl-alpha-D-glucosamine.

It belongs to the glycosyltransferase 28 family. MurG subfamily.

It is found in the cell membrane. It carries out the reaction di-trans,octa-cis-undecaprenyl diphospho-N-acetyl-alpha-D-muramoyl-L-alanyl-D-glutamyl-meso-2,6-diaminopimeloyl-D-alanyl-D-alanine + UDP-N-acetyl-alpha-D-glucosamine = di-trans,octa-cis-undecaprenyl diphospho-[N-acetyl-alpha-D-glucosaminyl-(1-&gt;4)]-N-acetyl-alpha-D-muramoyl-L-alanyl-D-glutamyl-meso-2,6-diaminopimeloyl-D-alanyl-D-alanine + UDP + H(+). It participates in cell wall biogenesis; peptidoglycan biosynthesis. Functionally, cell wall formation. Catalyzes the transfer of a GlcNAc subunit on undecaprenyl-pyrophosphoryl-MurNAc-pentapeptide (lipid intermediate I) to form undecaprenyl-pyrophosphoryl-MurNAc-(pentapeptide)GlcNAc (lipid intermediate II). The chain is UDP-N-acetylglucosamine--N-acetylmuramyl-(pentapeptide) pyrophosphoryl-undecaprenol N-acetylglucosamine transferase from Clostridium botulinum (strain 657 / Type Ba4).